A 349-amino-acid polypeptide reads, in one-letter code: Transcription repressor OFP5 (349 aa).

Disordered stretches follow at residues 1 to 20 (MMRW…GLSR), 29 to 94 (KLSG…KESN), and 143 to 183 (KQRC…GYSR). Over residues 10 to 20 (VSSSSSSGLSR) the composition is skewed to low complexity. Positions 37–48 (KPAKEKKQDEKA) are enriched in basic and acidic residues. Polar residues predominate over residues 49–62 (SQNISVKTSLSSTT). Basic and acidic residues-rich tracts occupy residues 63–94 (RRSD…KESN) and 143–167 (KQRC…DAGV). In terms of domain architecture, OVATE spans 286-345 (VVKCSSDPQKDFRDSMIEMIMENGINHPEELKELLVCYLRLNTDEYHDMIISVFQQVHND).

In terms of assembly, interacts with BLH1, BLH2, BLH3, BLH4, BLH6 and BLH10. In terms of tissue distribution, expressed in roots, rosette and cauline leaves, and flower buds.

The protein resides in the nucleus. Its function is as follows. Transcriptional repressor that regulates multiple aspects of plant growth and development through the regulation of BEL1-LIKE (BLH) and KNOX TALE (KNAT) homeodomain transcription factors. Required for embryo development. The protein is Transcription repressor OFP5 (OFP5) of Arabidopsis thaliana (Mouse-ear cress).